The following is a 79-amino-acid chain: uncharacterized protein (79 aa).

Residues M1 to A19 form the signal peptide.

As to expression, nacreous layer of shell (at protein level). Expressed primarily in the mantle with highest level in the mantle pallium and lower level in the mantle edge.

Its subcellular location is the secreted. This is an uncharacterized protein from Pinctada maxima (Silver-lipped pearl oyster).